A 304-amino-acid chain; its full sequence is Tyrosine recombinase XerC (304 aa).

A Core-binding (CB) domain is found at 2 to 88 (ANVKNFLTLF…ALRSFYKFLL (87 aa)). The region spanning 109-294 (RIPKFLYEKE…SKDMLRKTYM (186 aa)) is the Tyr recombinase domain. Residues R149, K173, H246, R249, and H272 contribute to the active site. Residue Y281 is the O-(3'-phospho-DNA)-tyrosine intermediate of the active site.

This sequence belongs to the 'phage' integrase family. XerC subfamily. Forms a cyclic heterotetrameric complex composed of two molecules of XerC and two molecules of XerD.

Its subcellular location is the cytoplasm. Its function is as follows. Site-specific tyrosine recombinase, which acts by catalyzing the cutting and rejoining of the recombining DNA molecules. The XerC-XerD complex is essential to convert dimers of the bacterial chromosome into monomers to permit their segregation at cell division. It also contributes to the segregational stability of plasmids. This chain is Tyrosine recombinase XerC, found in Bacillus licheniformis (strain ATCC 14580 / DSM 13 / JCM 2505 / CCUG 7422 / NBRC 12200 / NCIMB 9375 / NCTC 10341 / NRRL NRS-1264 / Gibson 46).